A 900-amino-acid chain; its full sequence is Translation initiation factor IF-2 (900 aa).

Positions 80-95 (LEEQSRKTVEKEDQLR) are enriched in basic and acidic residues. 3 disordered regions span residues 80 to 106 (LEEQSRKTVEKEDQLRDTLQPSPVPGR), 149 to 169 (AVEAEPEVAPPSLEAEEDSPV), and 221 to 268 (DEFD…VDEK). A compositionally biased stretch (basic residues) spans 253 to 262 (GKKKGKKKKK). The region spanning 397–567 (TRPPVVTIMG…LTEAEVRELK (171 aa)) is the tr-type G domain. A G1 region spans residues 406-413 (GHVDHGKT). Position 406 to 413 (406 to 413 (GHVDHGKT)) interacts with GTP. The interval 431–435 (GITQH) is G2. Positions 453–456 (DTPG) are G3. GTP is bound by residues 453–457 (DTPGH) and 507–510 (NKID). A G4 region spans residues 507–510 (NKID). The G5 stretch occupies residues 543 to 545 (SAK).

The protein belongs to the TRAFAC class translation factor GTPase superfamily. Classic translation factor GTPase family. IF-2 subfamily.

It localises to the cytoplasm. One of the essential components for the initiation of protein synthesis. Protects formylmethionyl-tRNA from spontaneous hydrolysis and promotes its binding to the 30S ribosomal subunits. Also involved in the hydrolysis of GTP during the formation of the 70S ribosomal complex. The chain is Translation initiation factor IF-2 from Chlorobium phaeovibrioides (strain DSM 265 / 1930) (Prosthecochloris vibrioformis (strain DSM 265)).